The primary structure comprises 626 residues: Chaperone protein HtpG (626 aa).

The a; substrate-binding stretch occupies residues 1-339 (MSQNQETRGF…SNDLPLNVSR (339 aa)). A b region spans residues 340–555 (EILQDNKITA…NDQMTTQMAK (216 aa)). The interval 556–626 (LFAAAGQPVP…FIKRINKLLG (71 aa)) is c.

It belongs to the heat shock protein 90 family. As to quaternary structure, homodimer.

The protein resides in the cytoplasm. Functionally, molecular chaperone. Has ATPase activity. In Haemophilus influenzae (strain ATCC 51907 / DSM 11121 / KW20 / Rd), this protein is Chaperone protein HtpG.